The following is a 285-amino-acid chain: Ribose-phosphate pyrophosphokinase (285 aa).

ATP-binding positions include 33-35 (DGE) and 91-92 (RQ). Positions 125 and 162 each coordinate Mg(2+). The active site involves K185. Residues R187, D211, and 215 to 219 (STGGT) each bind D-ribose 5-phosphate.

The protein belongs to the ribose-phosphate pyrophosphokinase family. Class III (archaeal) subfamily. Mg(2+) serves as cofactor.

Its subcellular location is the cytoplasm. It catalyses the reaction D-ribose 5-phosphate + ATP = 5-phospho-alpha-D-ribose 1-diphosphate + AMP + H(+). Its pathway is metabolic intermediate biosynthesis; 5-phospho-alpha-D-ribose 1-diphosphate biosynthesis; 5-phospho-alpha-D-ribose 1-diphosphate from D-ribose 5-phosphate (route I): step 1/1. Involved in the biosynthesis of the central metabolite phospho-alpha-D-ribosyl-1-pyrophosphate (PRPP) via the transfer of pyrophosphoryl group from ATP to 1-hydroxyl of ribose-5-phosphate (Rib-5-P). This Methanothermobacter thermautotrophicus (strain ATCC 29096 / DSM 1053 / JCM 10044 / NBRC 100330 / Delta H) (Methanobacterium thermoautotrophicum) protein is Ribose-phosphate pyrophosphokinase.